A 620-amino-acid polypeptide reads, in one-letter code: MSFDIAKYPTLALVDSTQELRLLPKESLPKLSDELRRYLLDSVSRSSGHFASGLGTVELTVALHYVYNTPFDQLIWDVGHQAYPHKILTGRRDKIGTIRQKGGLHPFPWRGESEFDVLSVGHSSTSISAGIGIAVAAEKENKQRRTVCVIGDGAITAGMAFEAMNHAGDIKPDMLVILNDNEMSISENVGALNNHLAQLLSGKLYSTLREGGKKVFSGVPPIKELLKRTEEHIKGMVVPGTLFEELGFNYIGPVDGHDVLGLVTTLKNMRDLKGPQFLHIMTKKGRGYEPAEKDPITFHAVPKFDPTSGCLPKSSGGMPSYSKIFGDWLCETAAKDNKLMAVTPAMREGSGMVEFSKKYPDQYFDVAIAEQHAVTFAAGLAIGGYKPIVAIYSTFLQRAYDQVIHDVAIQKLPVLFAIDRAGIVGADGQTHQGAFDLSFLRCVPDMVVMTPSDENECRQMLFTGYHYQDGPSAVRYPRGNAVGVELEPLTKMPIGKGIVKRHGEKLAILNFGTLMPEAAKVAESMNATLVDMRFVKPLDETLILEMASRHEVLITLEENAIMGGAGSGVNEVLMANRKPIPVLNLGLPDRFIPQGTQDEARAEIGLDAAGIEAKIRTWLA.

Residues H80 and 121-123 (GHS) contribute to the thiamine diphosphate site. D152 is a binding site for Mg(2+). Thiamine diphosphate is bound by residues 153-154 (GA), N181, Y288, and E370. N181 is a Mg(2+) binding site.

The protein belongs to the transketolase family. DXPS subfamily. As to quaternary structure, homodimer. Requires Mg(2+) as cofactor. It depends on thiamine diphosphate as a cofactor.

The catalysed reaction is D-glyceraldehyde 3-phosphate + pyruvate + H(+) = 1-deoxy-D-xylulose 5-phosphate + CO2. Its pathway is metabolic intermediate biosynthesis; 1-deoxy-D-xylulose 5-phosphate biosynthesis; 1-deoxy-D-xylulose 5-phosphate from D-glyceraldehyde 3-phosphate and pyruvate: step 1/1. In terms of biological role, catalyzes the acyloin condensation reaction between C atoms 2 and 3 of pyruvate and glyceraldehyde 3-phosphate to yield 1-deoxy-D-xylulose-5-phosphate (DXP). This chain is 1-deoxy-D-xylulose-5-phosphate synthase, found in Enterobacter sp. (strain 638).